The chain runs to 982 residues: Ubiquitin carboxyl-terminal hydrolase 15 (982 aa).

One can recognise a DUSP domain in the interval 7–118 (VDLETQRSEV…SQQPIARKVV (112 aa)). In terms of domain architecture, USP spans 288–933 (CGLSNLGNTC…AAYVLFYQRQ (646 aa)). Catalysis depends on C297, which acts as the Nucleophile. Positions 623–695 (TEENDGSLHC…DNDSENGLCT (73 aa)) are disordered. Positions 655 to 672 (METDEPDDESSQDQELPS) are enriched in acidic residues. H891 acts as the Proton acceptor in catalysis. The disordered stretch occupies residues 950 to 982 (QGASAATGAPHESDEESNEDENDIENENCMHTN). The span at 962 to 975 (SDEESNEDENDIEN) shows a compositional bias: acidic residues.

The protein belongs to the peptidase C19 family.

The protein localises to the cytoplasm. Its subcellular location is the nucleus. The catalysed reaction is Thiol-dependent hydrolysis of ester, thioester, amide, peptide and isopeptide bonds formed by the C-terminal Gly of ubiquitin (a 76-residue protein attached to proteins as an intracellular targeting signal).. In terms of biological role, hydrolase that removes conjugated ubiquitin from target proteins and regulates various pathways such as the TGF-beta receptor signaling and NF-kappa-B pathways. Acts as a key regulator of TGF-beta receptor signaling pathway, but the precise mechanism is still unclear: according to a report, acts by promoting deubiquitination of monoubiquitinated R-SMADs, thereby alleviating inhibition of R-SMADs and promoting activation of TGF-beta target genes. According to another reports, regulates the TGF-beta receptor signaling pathway by mediating deubiquitination and stabilization of tgfbr1, leading to an enhanced TGF-beta signal. May also regulate gene expression and/or DNA repair through the deubiquitination of histone H2B. Involved in endosome organization by mediating deubiquitination of rnf26 target(s), releasing vesicles that are restrained in the perinuclear region. The chain is Ubiquitin carboxyl-terminal hydrolase 15 (usp15) from Xenopus tropicalis (Western clawed frog).